The primary structure comprises 1279 residues: MTLTERLREKISQAFYNHGLLCASYPIPIILFTGLCILACCYPLLKLPLPGTGPVEFTTPVKDYSPPPSASDHKPGEPSEQPEWYVGAPVAYIQQIFVKSSVSPWHKNLLAVDVFRSPLSRAFQLVEEIRNHVLRDSSGTRSLEEVCLQVTDLLPGLRKLRNILPEHGCLLLSPGNFWQNDRERFHADPDIIGTIHQHEPKTLQTSATLKDLLFGVPGKHSGVSLYTRKRLVSYTITLVFQHYHAKFLGSLRARLMLLHPSPNCSLRAESLVHVHFKEEIGIAELIPLVTTYIILFAYIYFSTRKIDMVKSKWGLALAAVVTVLSSLLMSVGLCTLFGLTPTLNGGEIFPYLVVVIGLENVLVLTKSVVSTPVDLEVKLRIAQGLSSESWSIMKNMATELGIILIGYFTLVPAIQEFCLFAVVGLVSDFFLQMPFFTTVLSIDIRRMELADLNKRLPPEACLPPAKPVGRSARFERQLAVRPATPHTITLQPSSFRNLRLPKRLRVIYFLARTRLAQRLIMAGTVVWIGILAYTDPAGLRTYLAAQVTEQSPLGEGALAPMPVPSGVLPASHPDPAFSIFPPEAPKLLENQTLPGEPPEPGGQAEGVHDSPAPEVTWGPEDEELWRKLSFRHWPTLFSYYNITLAKRYISLLPVIPVTLRLNPREALEGRHPQDSRSAWSPPQPAQGGLWDAGPKGPGVAQAHRDVTLYKVAALGLATGILLVLLLCLYRVLCPRNYGQPGAGPGRRRRGELPCDDYGYAPPETEIVPLVLRGHLMDIECLASDGMLLVSCCLAGHVCVWDAQTGDCLTRIPHPGRQRRDSGVGSVLEAQENWERLSDGGKASPEEPGDSPPLRHRPRGTPLPSLFGDQPDLTCLIDTNFSAHPRLPELDHPEPRHRSGCRRTQDCTGYDFSRLVQRAYQEEGMVPMHTPAPRPPSPGPTPPQTPEDEGSFPPEKGSPSFTWAPSADGSIWSLELQGNLIVVGRSSGRLEVWDAIEGMLRCSSEEVASGITALVFLDKRIVAARLNGSLDFFSLETHTALSPLQFRGAPGRGSSPTSPVYSSSDTVVCHLTHTVPCAHQKPITALKAAAGRLVTGSQDHTLRVFRLEDSCCLFTLQGHSGAITTVYIDQTMVLASGGQDGAICLWDVLTGSRVSHMFAHRGDVTSLTCTTSCVISSGLDDLISIWDRSTGIKLYSIQQDLGCGASLGVISDNLLVTGGQGCVSFWDLNYGDLLQTVYLGKDSEAQPARQILVLDNAAIVCNFGSELSLVYVPSVLEKLD.

The Cytoplasmic portion of the chain corresponds to 1–18 (MTLTERLREKISQAFYNH). Residues 19 to 39 (GLLCASYPIPIILFTGLCILA) form a helical membrane-spanning segment. The Lumenal segment spans residues 40-279 (CCYPLLKLPL…SLVHVHFKEE (240 aa)). A loop-1 region spans residues 46 to 284 (KLPLPGTGPV…HFKEEIGIAE (239 aa)). A disordered region spans residues 60–81 (PVKDYSPPPSASDHKPGEPSEQ). Asparagine 263 carries an N-linked (GlcNAc...) asparagine glycan. The chain crosses the membrane as a helical span at residues 280 to 300 (IGIAELIPLVTTYIILFAYIY). Positions 284 to 442 (ELIPLVTTYI…MPFFTTVLSI (159 aa)) constitute an SSD domain. At 301–312 (FSTRKIDMVKSK) the chain is on the cytoplasmic side. The chain crosses the membrane as a helical span at residues 313-333 (WGLALAAVVTVLSSLLMSVGL). At 334–344 (CTLFGLTPTLN) the chain is on the lumenal side. Residues 345 to 365 (GGEIFPYLVVVIGLENVLVLT) traverse the membrane as a helical segment. Residues 366 to 401 (KSVVSTPVDLEVKLRIAQGLSSESWSIMKNMATELG) are Cytoplasmic-facing. The helical transmembrane segment at 402–422 (IILIGYFTLVPAIQEFCLFAV) threads the bilayer. A topological domain (lumenal) is located at residue valine 423. A helical membrane pass occupies residues 424–444 (GLVSDFFLQMPFFTTVLSIDI). The Cytoplasmic portion of the chain corresponds to 445–518 (RRMELADLNK…FLARTRLAQR (74 aa)). An ER export signal motif is present at residues 447 to 452 (MELADL). Glycyl lysine isopeptide (Lys-Gly) (interchain with G-Cter in ubiquitin) cross-links involve residues lysine 454 and lysine 466. Residues 519 to 539 (LIMAGTVVWIGILAYTDPAGL) traverse the membrane as a helical segment. Residues 535 to 710 (DPAGLRTYLA…QAHRDVTLYK (176 aa)) are loop-7. The Lumenal portion of the chain corresponds to 540–707 (RTYLAAQVTE…GVAQAHRDVT (168 aa)). Residues 588–617 (LENQTLPGEPPEPGGQAEGVHDSPAPEVTW) form a disordered region. 2 N-linked (GlcNAc...) asparagine glycosylation sites follow: asparagine 590 and asparagine 641. Residues 668-696 (EGRHPQDSRSAWSPPQPAQGGLWDAGPKG) are disordered. A helical membrane pass occupies residues 708 to 728 (LYKVAALGLATGILLVLLLCL). The Cytoplasmic portion of the chain corresponds to 729 to 1279 (YRVLCPRNYG…YVPSVLEKLD (551 aa)). The segment at 730–1279 (RVLCPRNYGQ…YVPSVLEKLD (550 aa)) is interaction with SREBF2. The stretch at 770 to 810 (VLRGHLMDIECLASDGMLLVSCCLAGHVCVWDAQTGDCLTR) is one WD 1 repeat. Residues serine 821, serine 837, serine 843, and serine 850 each carry the phosphoserine modification. Disordered stretches follow at residues 834–868 (ERLSDGGKASPEEPGDSPPLRHRPRGTPLPSLFGD), 883–903 (HPRLPELDHPEPRHRSGCRRT), and 925–959 (VPMHTPAPRPPSPGPTPPQTPEDEGSFPPEKGSPS). A compositionally biased stretch (basic and acidic residues) spans 885 to 896 (RLPELDHPEPRH). Positions 929–944 (TPAPRPPSPGPTPPQT) are enriched in pro residues. Serine 936 is modified (phosphoserine). WD repeat units lie at residues 952 to 1002 (PPEK…LRCS) and 1005 to 1042 (EVASGITALVFLDKRIVAARLNGSLDFFSLETHTALSP). Arginine 1051 carries the omega-N-methylarginine modification. WD repeat units lie at residues 1077-1114 (AHQKPITALKAAAGRLVTGSQDHTLRVFRLEDSCCLFT), 1117-1155 (GHSGAITTVYIDQTMVLASGGQDGAICLWDVLTGSRVSH), 1158-1195 (AHRGDVTSLTCTTSCVISSGLDDLISIWDRSTGIKLYS), and 1197-1235 (QQDLGCGASLGVISDNLLVTGGQGCVSFWDLNYGDLLQT).

The protein belongs to the WD repeat SCAP family. As to quaternary structure, membrane region forms a homotetramer. Component of the SCAP-SREBP complex (composed of SCAP and SREBF1/SREBP1 or SREBF2/SREBP2); interacts with SREBF1/SREBP1 or SREBF2/SREBP2 through its C-terminal cytoplasmic domain. Forms a ternary complex with INSIG1 or INSIG2 through its transmembrane domains at high sterol concentrations. Interacts with PAQR3; the interaction anchors the SCAP-SREBP complex to the Golgi apparatus in low cholesterol conditions. Interacts with the SEC23-SEC24 complex in a SAR1-GTP-dependent manner through an ER export signal in its third cytoplasmic loop. Interacts with RNF139; the interaction inhibits the interaction of SCAP with SEC24B and hampering the ER to Golgi transport of the SCAP-SREBP complex. Interacts with SPRING1. Post-translationally, ubiquitinated at Lys-454 and Lys-466. RNF145 triggers ubiquitination of SCAP, likely inhibiting SCAP-SREBP complex transport to the Golgi apparatus and the subsequent processing/maturation of SREBF2/SREBP2. As to expression, widely expressed with higher levels in lung, kidney, gut, brain and adipose tissue. In terms of tissue distribution, expressed in liver and muscle. Isoform 3 expressed in testis. Expressed in testis.

It localises to the endoplasmic reticulum membrane. The protein resides in the golgi apparatus membrane. The protein localises to the cytoplasmic vesicle. Its subcellular location is the COPII-coated vesicle membrane. Functionally, escort protein required for cholesterol as well as lipid homeostasis. Regulates export of the SCAP-SREBP complex from the endoplasmic reticulum to the Golgi upon low cholesterol, thereby regulating the processing of sterol regulatory element-binding proteins (SREBPs) SREBF1/SREBP1 and SREBF2/SREBP2. At high sterol concentrations, formation of a ternary complex with INSIG (INSIG1 or INSIG2) leads to mask the ER export signal in SCAP, promoting retention of the complex in the endoplasmic reticulum. Low sterol concentrations trigger release of INSIG, a conformational change in the SSD domain of SCAP, unmasking of the ER export signal, promoting recruitment into COPII-coated vesicles and transport of the SCAP-SREBP to the Golgi: in the Golgi, SREBPs are then processed, releasing the transcription factor fragment of SREBPs from the membrane, its import into the nucleus and up-regulation of LDLR, INSIG1 and the mevalonate pathway. Binds cholesterol via its SSD domain. This chain is Sterol regulatory element-binding protein cleavage-activating protein, found in Sus scrofa (Pig).